Consider the following 243-residue polypeptide: Probable transcriptional regulatory protein LCABL_11860 (243 aa).

The segment at 1–23 (MSGHSKWHNIQGRKNAQDSKRGK) is disordered.

Belongs to the TACO1 family.

Its subcellular location is the cytoplasm. The protein is Probable transcriptional regulatory protein LCABL_11860 of Lacticaseibacillus casei (strain BL23) (Lactobacillus casei).